The following is a 117-amino-acid chain: Small ribosomal subunit protein bS6 (117 aa).

Belongs to the bacterial ribosomal protein bS6 family.

Binds together with bS18 to 16S ribosomal RNA. This is Small ribosomal subunit protein bS6 from Porphyromonas gingivalis (strain ATCC BAA-308 / W83).